The chain runs to 243 residues: 3-deoxy-manno-octulosonate cytidylyltransferase (243 aa).

The protein belongs to the KdsB family.

It localises to the cytoplasm. The enzyme catalyses 3-deoxy-alpha-D-manno-oct-2-ulosonate + CTP = CMP-3-deoxy-beta-D-manno-octulosonate + diphosphate. Its pathway is nucleotide-sugar biosynthesis; CMP-3-deoxy-D-manno-octulosonate biosynthesis; CMP-3-deoxy-D-manno-octulosonate from 3-deoxy-D-manno-octulosonate and CTP: step 1/1. It functions in the pathway bacterial outer membrane biogenesis; lipopolysaccharide biosynthesis. Activates KDO (a required 8-carbon sugar) for incorporation into bacterial lipopolysaccharide in Gram-negative bacteria. This is 3-deoxy-manno-octulosonate cytidylyltransferase from Helicobacter pylori (strain J99 / ATCC 700824) (Campylobacter pylori J99).